We begin with the raw amino-acid sequence, 292 residues long: Ribonuclease HIII (292 aa).

The region spanning 76–292 (TNLIGTDEVG…TQKAIKIAQL (217 aa)) is the RNase H type-2 domain. 3 residues coordinate a divalent metal cation: Asp82, Glu83, and Asp186.

This sequence belongs to the RNase HII family. RnhC subfamily. Requires Mn(2+) as cofactor. It depends on Mg(2+) as a cofactor.

The protein resides in the cytoplasm. It carries out the reaction Endonucleolytic cleavage to 5'-phosphomonoester.. Endonuclease that specifically degrades the RNA of RNA-DNA hybrids. The chain is Ribonuclease HIII from Lactococcus lactis subsp. lactis (strain IL1403) (Streptococcus lactis).